Consider the following 679-residue polypeptide: Translation initiation factor IF-2 (679 aa).

Residues 178-347 enclose the tr-type G domain; sequence KRPPIITVMG…LLTSEMQELK (170 aa). Positions 187–194 are G1; sequence GHVDHGKT. 187–194 serves as a coordination point for GTP; it reads GHVDHGKT. The G2 stretch occupies residues 212-216; that stretch reads GITQH. Residues 233-236 are G3; it reads DTPG. GTP contacts are provided by residues 233–237 and 287–290; these read DTPGH and NKMD. The G4 stretch occupies residues 287-290; the sequence is NKMD. Residues 323–325 form a G5 region; it reads SAK.

This sequence belongs to the TRAFAC class translation factor GTPase superfamily. Classic translation factor GTPase family. IF-2 subfamily.

The protein localises to the cytoplasm. In terms of biological role, one of the essential components for the initiation of protein synthesis. Protects formylmethionyl-tRNA from spontaneous hydrolysis and promotes its binding to the 30S ribosomal subunits. Also involved in the hydrolysis of GTP during the formation of the 70S ribosomal complex. This Clostridium perfringens (strain ATCC 13124 / DSM 756 / JCM 1290 / NCIMB 6125 / NCTC 8237 / Type A) protein is Translation initiation factor IF-2.